The chain runs to 170 residues: UPF0260 protein RPE_1881 (170 aa).

The protein belongs to the UPF0260 family.

The protein is UPF0260 protein RPE_1881 of Rhodopseudomonas palustris (strain BisA53).